The chain runs to 142 residues: Large ribosomal subunit protein uL11 (142 aa).

This sequence belongs to the universal ribosomal protein uL11 family. Part of the ribosomal stalk of the 50S ribosomal subunit. Interacts with L10 and the large rRNA to form the base of the stalk. L10 forms an elongated spine to which L12 dimers bind in a sequential fashion forming a multimeric L10(L12)X complex. In terms of processing, one or more lysine residues are methylated.

In terms of biological role, forms part of the ribosomal stalk which helps the ribosome interact with GTP-bound translation factors. This is Large ribosomal subunit protein uL11 from Leptospira interrogans serogroup Icterohaemorrhagiae serovar copenhageni (strain Fiocruz L1-130).